We begin with the raw amino-acid sequence, 243 residues long: Homologous-pairing protein 2 homolog (243 aa).

Positions 86-153 (QESIHDLNRK…ESKLLTFQTK (68 aa)) form a coiled coil. Positions 217 to 243 (IPDYSKPLSQQTLSSTNDESPFKKQKK) are disordered. Over residues 223–235 (PLSQQTLSSTNDE) the composition is skewed to polar residues.

It belongs to the HOP2 family.

The protein localises to the nucleus. In terms of biological role, required for proper homologous pairing and efficient cross-over and intragenic recombination during meiosis. The protein is Homologous-pairing protein 2 homolog (hop2) of Dictyostelium discoideum (Social amoeba).